The chain runs to 409 residues: LL-diaminopimelate aminotransferase (409 aa).

Substrate-binding residues include tyrosine 15 and glycine 42. Residues tyrosine 72, 108-109 (SK), tyrosine 132, asparagine 187, tyrosine 218, and 246-248 (SFS) each bind pyridoxal 5'-phosphate. 3 residues coordinate substrate: lysine 109, tyrosine 132, and asparagine 187. Lysine 249 carries the post-translational modification N6-(pyridoxal phosphate)lysine. The pyridoxal 5'-phosphate site is built by arginine 257 and asparagine 292. Substrate contacts are provided by asparagine 292 and arginine 388.

Belongs to the class-I pyridoxal-phosphate-dependent aminotransferase family. LL-diaminopimelate aminotransferase subfamily. As to quaternary structure, homodimer. Requires pyridoxal 5'-phosphate as cofactor.

The enzyme catalyses (2S,6S)-2,6-diaminopimelate + 2-oxoglutarate = (S)-2,3,4,5-tetrahydrodipicolinate + L-glutamate + H2O + H(+). It functions in the pathway amino-acid biosynthesis; L-lysine biosynthesis via DAP pathway; LL-2,6-diaminopimelate from (S)-tetrahydrodipicolinate (aminotransferase route): step 1/1. In terms of biological role, involved in the synthesis of meso-diaminopimelate (m-DAP or DL-DAP), required for both lysine and peptidoglycan biosynthesis. Catalyzes the direct conversion of tetrahydrodipicolinate to LL-diaminopimelate. In Heliobacterium modesticaldum (strain ATCC 51547 / Ice1), this protein is LL-diaminopimelate aminotransferase.